The sequence spans 371 residues: Chaperone protein DnaJ (371 aa).

Residues 4-68 form the J domain; the sequence is DYYQILGVSK…QKRAAYDRFG (65 aa). The CR-type zinc-finger motif lies at 134 to 212; it reads GIEKNISFSS…CHGMGRYHKQ (79 aa). Zn(2+)-binding residues include Cys147, Cys150, Cys164, Cys167, Cys186, Cys189, Cys200, and Cys203. CXXCXGXG motif repeat units follow at residues 147–154, 164–171, 186–193, and 200–207; these read CDTCHGTG, CDACGGVG, CHKCQGNG, and CKKCHGMG.

Belongs to the DnaJ family. In terms of assembly, homodimer. Requires Zn(2+) as cofactor.

Its subcellular location is the cytoplasm. Participates actively in the response to hyperosmotic and heat shock by preventing the aggregation of stress-denatured proteins and by disaggregating proteins, also in an autonomous, DnaK-independent fashion. Unfolded proteins bind initially to DnaJ; upon interaction with the DnaJ-bound protein, DnaK hydrolyzes its bound ATP, resulting in the formation of a stable complex. GrpE releases ADP from DnaK; ATP binding to DnaK triggers the release of the substrate protein, thus completing the reaction cycle. Several rounds of ATP-dependent interactions between DnaJ, DnaK and GrpE are required for fully efficient folding. Also involved, together with DnaK and GrpE, in the DNA replication of plasmids through activation of initiation proteins. This is Chaperone protein DnaJ from Rickettsia felis (strain ATCC VR-1525 / URRWXCal2) (Rickettsia azadi).